A 147-amino-acid chain; its full sequence is Ribosome maturation factor RimP (147 aa).

Belongs to the RimP family.

It localises to the cytoplasm. Functionally, required for maturation of 30S ribosomal subunits. This chain is Ribosome maturation factor RimP, found in Sulfurihydrogenibium sp. (strain YO3AOP1).